We begin with the raw amino-acid sequence, 332 residues long: NH(3)-dependent NAD(+) synthetase (332 aa).

48–55 serves as a coordination point for ATP; that stretch reads GLSGGVDS. Asp-54 contributes to the Mg(2+) binding site. Position 184 (Arg-184) interacts with deamido-NAD(+). Thr-204 contacts ATP. Mg(2+) is bound at residue Glu-209. Deamido-NAD(+)-binding residues include Lys-217 and Asp-224. ATP is bound by residues Lys-233 and Thr-255.

This sequence belongs to the NAD synthetase family. Homodimer.

It catalyses the reaction deamido-NAD(+) + NH4(+) + ATP = AMP + diphosphate + NAD(+) + H(+). The protein operates within cofactor biosynthesis; NAD(+) biosynthesis; NAD(+) from deamido-NAD(+) (ammonia route): step 1/1. Its function is as follows. Catalyzes the ATP-dependent amidation of deamido-NAD to form NAD. Uses ammonia as a nitrogen source. This is NH(3)-dependent NAD(+) synthetase from Rhizobium rhizogenes (strain K84 / ATCC BAA-868) (Agrobacterium radiobacter).